Consider the following 565-residue polypeptide: Coiled-coil domain-containing protein 17 (565 aa).

The segment at 58–87 (IMAQEKSRDQEASTSALKRLTEETAGSPGE) is disordered. 2 coiled-coil regions span residues 97 to 160 (ARRM…TLGA) and 219 to 271 (LQLQ…KVLS).

The protein is Coiled-coil domain-containing protein 17 (Ccdc17) of Mus musculus (Mouse).